The following is a 263-amino-acid chain: uncharacterized protein (263 aa).

One copy of the WD repeat lies at 53 to 89 (SAVTASKFSPDGRWLVNLTDQGYVQLWDVHKGERVKT).

This is an uncharacterized protein from Deinococcus radiodurans (strain ATCC 13939 / DSM 20539 / JCM 16871 / CCUG 27074 / LMG 4051 / NBRC 15346 / NCIMB 9279 / VKM B-1422 / R1).